A 179-amino-acid chain; its full sequence is Acireductone dioxygenase (179 aa).

Fe(2+)-binding residues include H97, H99, E103, and H141. Residues H97, H99, E103, and H141 each coordinate Ni(2+).

This sequence belongs to the acireductone dioxygenase (ARD) family. As to quaternary structure, monomer. It depends on Fe(2+) as a cofactor. Requires Ni(2+) as cofactor.

It catalyses the reaction 1,2-dihydroxy-5-(methylsulfanyl)pent-1-en-3-one + O2 = 3-(methylsulfanyl)propanoate + CO + formate + 2 H(+). The enzyme catalyses 1,2-dihydroxy-5-(methylsulfanyl)pent-1-en-3-one + O2 = 4-methylsulfanyl-2-oxobutanoate + formate + 2 H(+). It participates in amino-acid biosynthesis; L-methionine biosynthesis via salvage pathway; L-methionine from S-methyl-5-thio-alpha-D-ribose 1-phosphate: step 5/6. Catalyzes 2 different reactions between oxygen and the acireductone 1,2-dihydroxy-3-keto-5-methylthiopentene (DHK-MTPene) depending upon the metal bound in the active site. Fe-containing acireductone dioxygenase (Fe-ARD) produces formate and 2-keto-4-methylthiobutyrate (KMTB), the alpha-ketoacid precursor of methionine in the methionine recycle pathway. Ni-containing acireductone dioxygenase (Ni-ARD) produces methylthiopropionate, carbon monoxide and formate, and does not lie on the methionine recycle pathway. This chain is Acireductone dioxygenase, found in Gluconacetobacter diazotrophicus (strain ATCC 49037 / DSM 5601 / CCUG 37298 / CIP 103539 / LMG 7603 / PAl5).